Reading from the N-terminus, the 361-residue chain is G2/mitotic-specific cyclin-B1 (361 aa).

Positions 1-13 (MLRATNNRRTSNN) are enriched in polar residues. The tract at residues 1–33 (MLRATNNRRTSNNVEKDSLQMAKHGNGPLKPVN) is disordered.

It belongs to the cyclin family. Cyclin AB subfamily. As to quaternary structure, interacts with the CDK1 protein kinase to form a serine/threonine kinase holoenzyme complex also known as maturation promoting factor (MPF). The cyclin subunit imparts substrate specificity to the complex. Interacts with E3 ubiquitin-protein ligase etc-1. Post-translationally, ubiquitinated by etc-1 likely during meiosis, resulting in its degradation.

Its subcellular location is the cytoplasm. In terms of biological role, essential for the control of the cell cycle at the G2/M (mitosis) transition. The protein is G2/mitotic-specific cyclin-B1 (cyb-1) of Caenorhabditis elegans.